Reading from the N-terminus, the 132-residue chain is MIYGVGTDICDIRRIAATLQRRGDRFAERVLGPREIEVFRYRRAKVEARGLSYLATRFSAKEAFSKAIGLGLHQPMSWRSCEILNAPSGQPQIHLHGALADWFAQRRLIAHVSLTDETDYATSFVVVETQGL.

Mg(2+) is bound by residues D8 and E62.

It belongs to the P-Pant transferase superfamily. AcpS family. It depends on Mg(2+) as a cofactor.

It localises to the cytoplasm. It carries out the reaction apo-[ACP] + CoA = holo-[ACP] + adenosine 3',5'-bisphosphate + H(+). Functionally, transfers the 4'-phosphopantetheine moiety from coenzyme A to a Ser of acyl-carrier-protein. The chain is Holo-[acyl-carrier-protein] synthase from Leptothrix cholodnii (strain ATCC 51168 / LMG 8142 / SP-6) (Leptothrix discophora (strain SP-6)).